The primary structure comprises 489 residues: MSLEFGFILINIFTAIVSFSTLSHALLHPSSVSHNVSRSRYYMTTNELWFNQTLDHESPNDHRKFRQRYYEFMDYFRSPDGPMFMIICGEGPCSGIANDYINVLAKKFQAGVVSLEHRYYGKSSPFNSLATENLKYLSSKQALYDLASFRQYYQESLNKKLNISSGGSDNPWFFFGISYSGALSAWFRLKFPHLTCGSLASSAVVRAIYEFSEFDQQIGESAGQECKLALQETNKLLELGLKVKNKAVKSLFNATELDVDADFLYLTADAAVMAFQYGNPDKLCVPLVEAKKNGSDLVVTYSTYVREYCMRIWGLRVRTYNRKHLRNTVVTADSAYRLWWFQACTELGYFQVAPKYDSVRSHQINTTFHLDLCKSLFGKDVYPKVDATNLYYGGDRLAATKIIFTNGSEDPWRHASKQNSTHEMPSYIIKCRNCGHGSDIRGCPQSPMVIEGKSNNCSLPDYVNKVRQQMVEHIDLWLSECRQSIRSSI.

A signal peptide spans 1–25 (MSLEFGFILINIFTAIVSFSTLSHA). Asparagine 35, asparagine 51, and asparagine 162 each carry an N-linked (GlcNAc...) asparagine glycan. Serine 178 acts as the Charge relay system in catalysis. Residues asparagine 253, asparagine 293, asparagine 365, and asparagine 406 are each glycosylated (N-linked (GlcNAc...) asparagine). The active-site Charge relay system is the aspartate 410. N-linked (GlcNAc...) asparagine glycosylation occurs at asparagine 419. Histidine 436 acts as the Charge relay system in catalysis. N-linked (GlcNAc...) asparagine glycosylation occurs at asparagine 456.

The protein belongs to the peptidase S28 family.

It localises to the secreted. Its function is as follows. May be involved in a proteolytic pathway controlling the nuclear division phase of megagametogenesis. This Arabidopsis thaliana (Mouse-ear cress) protein is Probable serine protease EDA2 (EDA2).